The sequence spans 346 residues: Phosphoribosylformylglycinamidine cyclo-ligase (346 aa).

It belongs to the AIR synthase family.

Its subcellular location is the cytoplasm. The enzyme catalyses 2-formamido-N(1)-(5-O-phospho-beta-D-ribosyl)acetamidine + ATP = 5-amino-1-(5-phospho-beta-D-ribosyl)imidazole + ADP + phosphate + H(+). The protein operates within purine metabolism; IMP biosynthesis via de novo pathway; 5-amino-1-(5-phospho-D-ribosyl)imidazole from N(2)-formyl-N(1)-(5-phospho-D-ribosyl)glycinamide: step 2/2. This is Phosphoribosylformylglycinamidine cyclo-ligase from Prochlorococcus marinus (strain NATL2A).